A 606-amino-acid polypeptide reads, in one-letter code: MACPF domain-containing protein At4g24290 (606 aa).

Residues 1–332 (MALRLPASKA…PPIEELHQFL (332 aa)) form the MACPF domain.

This sequence belongs to the complement C6/C7/C8/C9 (TC 1.C.39) family.

Functionally, negatively controls the salicylic acid (SA)-mediated pathway of programmed cell death in plant immunity. This chain is MACPF domain-containing protein At4g24290, found in Arabidopsis thaliana (Mouse-ear cress).